A 216-amino-acid chain; its full sequence is Transmembrane emp24 domain-containing protein p24delta5 (216 aa).

The N-terminal stretch at 1–27 is a signal peptide; that stretch reads MAINRIAHGSLFLTVVLFFLTVNYGEA. Residues 28–183 are Lumenal-facing; the sequence is IWLTIPTTGG…REVSETTNSR (156 aa). One can recognise a GOLD domain in the interval 38-151; that stretch reads TKCVSEEIQS…IEGVELQLRR (114 aa). An N-linked (GlcNAc...) asparagine glycan is attached at asparagine 86. A coiled-coil region spans residues 137-159; that stretch reads AKKEKIEGVELQLRRLEGLVLSI. Omega-N-methylated arginine is present on residues arginine 169 and arginine 174. Residues 184–204 traverse the membrane as a helical segment; the sequence is VAWFSIMSLGVCVVVVGSQIL. The Cytoplasmic segment spans residues 205–216; it reads YLKRYFHKKKLI. Residues 209-210 carry the COPII vesicle coat-binding motif; the sequence is YF. Residues 209-216 carry the COPI vesicle coat-binding motif; sequence YFHKKKLI.

The protein belongs to the EMP24/GP25L family. As to quaternary structure, probably oligomerizes with other members of the EMP24/GP25L family. Associates with the COPI vesicle coat (coatomer). Associates with the COPII vesicle coat (coatomer). Interacts with p24beta2.

The protein localises to the endoplasmic reticulum membrane. Functionally, involved in vesicular protein trafficking. Mainly functions in the early secretory pathway. Thought to act as cargo receptor at the lumenal side for incorporation of secretory cargo molecules into transport vesicles and to be involved in vesicle coat formation at the cytoplasmic side. Interacts with p24beta2 at endoplasmic reticulum export sites for endoplasmic reticulum exit and coupled transport to the Golgi apparatus. Once in the Golgi, interacts very efficiently with the COPI machinery for retrograde transport back to the endoplasmic reticulum. This is Transmembrane emp24 domain-containing protein p24delta5 from Arabidopsis thaliana (Mouse-ear cress).